A 248-amino-acid chain; its full sequence is Pulmonary surfactant-associated protein A (248 aa).

The signal sequence occupies residues 1 to 20; sequence MLLCSLTLTLLWMVASGLEC. The 73-residue stretch at 28 to 100 folds into the Collagen-like domain; sequence GSPGIPGTPG…PGERGPPGFP (73 aa). The interval 29-102 is disordered; it reads SPGIPGTPGS…ERGPPGFPAY (74 aa). A 4-hydroxyproline mark is found at Pro-30, Pro-33, Pro-36, Pro-42, Pro-54, Pro-57, Pro-63, Pro-67, and Pro-70. Residues 42–51 show a composition bias toward basic and acidic residues; the sequence is PGRDGRDGIK. Positions 54–65 are enriched in pro residues; sequence PGPPGPMGPPGG. The segment covering 69–82 has biased composition (low complexity); sequence LPGRDGMTGAPGLP. The segment covering 84–93 has biased composition (basic and acidic residues); that stretch reads ERGEKGEPGE. One can recognise a C-type lectin domain in the interval 132-248; that stretch reads LAVGEKVFST…LQYRLAICEF (117 aa). Disulfide bonds link Cys-155-Cys-246 and Cys-224-Cys-238. An N-linked (GlcNAc...) asparagine glycan is attached at Asn-207. Glu-215, Arg-217, Asn-234, and Asp-235 together coordinate Ca(2+).

Belongs to the SFTPA family. In terms of assembly, oligomeric complex of 6 set of homotrimers.

The protein resides in the secreted. Its subcellular location is the extracellular space. It localises to the extracellular matrix. It is found in the surface film. Functionally, in presence of calcium ions, it binds to surfactant phospholipids and contributes to lower the surface tension at the air-liquid interface in the alveoli of the mammalian lung and is essential for normal respiration. Enhances the expression of MYO18A/SP-R210 on alveolar macrophages. In Bos taurus (Bovine), this protein is Pulmonary surfactant-associated protein A (SFTPA1).